A 306-amino-acid polypeptide reads, in one-letter code: Acetaldehyde dehydrogenase (306 aa).

12–15 (SGNI) is an NAD(+) binding site. Cysteine 127 acts as the Acyl-thioester intermediate in catalysis. NAD(+)-binding positions include 158–166 (SAGPGTRAN) and asparagine 277.

The protein belongs to the acetaldehyde dehydrogenase family.

It carries out the reaction acetaldehyde + NAD(+) + CoA = acetyl-CoA + NADH + H(+). The chain is Acetaldehyde dehydrogenase from Mycolicibacterium gilvum (strain PYR-GCK) (Mycobacterium gilvum (strain PYR-GCK)).